The chain runs to 2068 residues: uncharacterized protein (2068 aa).

The next 2 membrane-spanning stretches (helical) occupy residues Phe-3–Ser-23 and Thr-51–Ile-71. The segment covering Gln-975 to Gln-998 has biased composition (basic and acidic residues). Residues Gln-975 to Val-1030 form a disordered region. Residues Glu-999–Gln-1018 are compositionally biased toward acidic residues. The chain crosses the membrane as a helical span at residues Phe-1890–Tyr-1910.

The protein localises to the membrane. This is an uncharacterized protein from Plasmodium falciparum (isolate 3D7).